Consider the following 31-residue polypeptide: Elongation factor Tu (31 aa).

It belongs to the GTP-binding elongation factor family. EF-Tu/EF-1A subfamily. Monomer.

It localises to the cytoplasm. Functionally, this protein promotes the GTP-dependent binding of aminoacyl-tRNA to the A-site of ribosomes during protein biosynthesis. The polypeptide is Elongation factor Tu (tuf) (Streptomyces laurentii).